The primary structure comprises 429 residues: Prenyltransferase okaC (429 aa).

Dimethylallyl diphosphate contacts are provided by arginine 101, lysine 189, tyrosine 191, lysine 257, tyrosine 259, tyrosine 342, tyrosine 406, and tyrosine 410.

This sequence belongs to the tryptophan dimethylallyltransferase family.

The catalysed reaction is cyclo(L-Trp-L-Trp) + 2 dimethylallyl diphosphate = cyclo(N(8)-(alpha,alpha-dimethylallyl)-L-Trp-6a-(alpha,alpha-dimethylallyl)-L-Trp) + 2 diphosphate. The protein operates within alkaloid biosynthesis. Prenyltransferase; part of the gene cluster that mediates the biosynthesis of okaramine B, a prenylated indole alkaloid that possesses an unusual octacyclic ring system, including a four-membered azetidine ring and an eight-membered azocine ring, and that exhibits insecticidal activity against silkworm larvae. Within the pathway, okaC performs asymmetric reverse prenylation of cyclo(L-Trp-L-Trp) at N-1 and C-2' of the indole ring to produce the cyclic prenylated tryptophan dimer cyclo(N8-(alpha,alpha-dimethylallyl)-L-Trp-6a-(alpha,alpha-dime-thylallyl)-L-Trp). The biosynthesis begins with the NRPS okaA that condenses two tryptophan molecules into cyclo(L-Trp-L-Trp). Prenylation by the prenyltransferase okaC then leads to the formation of cyclo(N8-(alpha,alpha-dimethylallyl)-L-Trp-6a-(alpha,alpha-dime-thylallyl)-L-Trp). This is followed by indole 2,3-epoxidation by the FAD-dependent monooxygenase okaB to facilitate the formation of the hexahydropyrrolo[2,3-b]indole (HPI) moiety of okaramine C. The cytochrome P450 monooxygenase okaD then likely catalyzes formation of the eight-membered ring of okaramine A. The dioxygenase okaE further forms the unusual 2-dimethyl-3-methyl-azetidine ring to yield 12-deshydroxyl okaramine E, as well as the hydroxylation of 12-deshydroxyl okaramine E to produce okaramine E. The cytochrome P450 monoxygenase okaG converts 12-deshydroxyl okaramine E into 3-desmethyl okaramine B which is further methylated by the methyltransferase okaF into okaramine B. In a shunt pathway, okaG and okaF together are also able to convert okaramine E into okaramine D. Okaramine H is produced by nonenzymatic conversion from okaramine A. The polypeptide is Prenyltransferase okaC (Penicillium ochrochloron).